Reading from the N-terminus, the 588-residue chain is MEVGKKLELSITADEVEVLSKAIKNEKFQEMLSNYFQEISSPENVKTYQEEVTLLEQKRGNSIEFIHPSPFRALETSVDGKQRCFINICACDKVGKPESKTVRTVQRFGEKWSLPHLLQPGRQNCERKGNISTIYDVCFHPETLHLADKSEKFMDMVKEVAIQGIQKAFKVLLDKSNLKEMDIKYKGVPQSCVIRKPIPGYEAKEPPEERDLSPSTSHLPENSIDVPSKLLQKQPEEPIKPIYAIKYRSVIDLQDFRVSRESARSLRPKEIVITIDLPLLPTVHGMVLEVEEKRLLLESENPSYRLELHLSYPVDENNGKAKFNKHQRQLTVTLPVQPPLEAPQLPGGSPNPTSDPQNENQTRVEERVEEMAEKGGEQHQRGNDNGAAQGRRQVLEDQNGEKEGKKIQKRNERPEHEVKNETLRKKHDEKFELQDVQQENKGNCSNTKEVKCCRRTKDSLDSLIPTTAASPDGQKKHILTQETEKPKGSVEIPTSSQEYLKVPVTSAATAANVNASDETSKRKPTEEQLEDADEDVLPAEQRFQEPEEINVPAAGTLRQNNAAGNEKINDPHTSAGFVLQNKLMYELD.

Disordered regions lie at residues 199–223 (PGYE…PENS), 338–498 (PPLE…SSQE), and 510–535 (AANV…ADED). A compositionally biased stretch (basic and acidic residues) spans 202-212 (EAKEPPEERDL). A compositionally biased stretch (polar residues) spans 350–361 (PNPTSDPQNENQ). 2 stretches are compositionally biased toward basic and acidic residues: residues 362 to 382 (TRVE…HQRG) and 393 to 433 (QVLE…KFEL). The segment covering 435 to 447 (DVQQENKGNCSNT) has biased composition (polar residues). Residues 448 to 460 (KEVKCCRRTKDSL) show a composition bias toward basic and acidic residues.

It belongs to the PIH1 family. Kintoun subfamily.

The protein localises to the cytoplasm. The protein resides in the dynein axonemal particle. Functionally, required for cytoplasmic pre-assembly of axonemal dyneins, thereby playing a central role in motility in cilia and flagella. Involved in pre-assembly of dynein arm complexes in the cytoplasm before intraflagellar transport loads them for the ciliary compartment. The chain is Protein kintoun from Oryzias latipes (Japanese rice fish).